Here is a 181-residue protein sequence, read N- to C-terminus: MENRNRNSRPIKNQDPVNEFIRAHQVLVIDEDKQNLGVMSKRQALEIAKSKNLDLYQVGVQPDGTVITRIVNFGKLKYEQQKKSKEAKKHQTKIENKEIRITVNIGKHDLETKARKAKEFLEEGSRVKVSLKFRGREVVYLDLGQQTLNNFFELVSDVGKMEKEAKLNGKFLDMYIVPKKN.

This sequence belongs to the IF-3 family. In terms of assembly, monomer.

Its subcellular location is the cytoplasm. In terms of biological role, IF-3 binds to the 30S ribosomal subunit and shifts the equilibrium between 70S ribosomes and their 50S and 30S subunits in favor of the free subunits, thus enhancing the availability of 30S subunits on which protein synthesis initiation begins. This is Translation initiation factor IF-3 from Mycoplasma capricolum subsp. capricolum (strain California kid / ATCC 27343 / NCTC 10154).